The sequence spans 414 residues: MVDHLKRQDEKVFAAIEAELGRQRSKIELIASENFVSEAVMEAQGSVLTNKYAEGYPGKRYYGGCEHVDVVEDIARDRVKEIFGAEHVNVQPHSGAQANMAVYFTILEQGDTVLGMNLSHGGHLTHGSPVNFSGVQYNFVEYGVDAESHRINYDDVLAKAKEHKPKLIVAGASAYPRVIDFKRFREIADEVGAYLMVDMAHIAGLVAAGLHPNPVPHAHFVTTTTHKTLRGPRGGMILCEEQFAKQIDKSIFPGIQGGPLMHVIAAKAVAFGEALQDDFKTYAQNIINNANRLAEGLQKEGLTLVSGGTDNHLILIDVRNLEITGKVAEHVLDEVGITVNKNTIPFETASPFVTSGVRIGTAAVTSRGFGLEEMDEIASLIAYTLKNHENEAALEEARKRVEALTSKFPMYTDL.

Residues Leu-118 and 122–124 (GHL) each bind (6S)-5,6,7,8-tetrahydrofolate. An N6-(pyridoxal phosphate)lysine modification is found at Lys-227. Residues Glu-240 and 350 to 352 (SPF) each bind (6S)-5,6,7,8-tetrahydrofolate.

This sequence belongs to the SHMT family. In terms of assembly, homodimer. Pyridoxal 5'-phosphate is required as a cofactor.

It is found in the cytoplasm. It catalyses the reaction (6R)-5,10-methylene-5,6,7,8-tetrahydrofolate + glycine + H2O = (6S)-5,6,7,8-tetrahydrofolate + L-serine. Its pathway is one-carbon metabolism; tetrahydrofolate interconversion. It functions in the pathway amino-acid biosynthesis; glycine biosynthesis; glycine from L-serine: step 1/1. In terms of biological role, catalyzes the reversible interconversion of serine and glycine with tetrahydrofolate (THF) serving as the one-carbon carrier. This reaction serves as the major source of one-carbon groups required for the biosynthesis of purines, thymidylate, methionine, and other important biomolecules. Also exhibits THF-independent aldolase activity toward beta-hydroxyamino acids, producing glycine and aldehydes, via a retro-aldol mechanism. This chain is Serine hydroxymethyltransferase, found in Bacillus cereus (strain ZK / E33L).